Reading from the N-terminus, the 204-residue chain is Urease accessory protein UreG (204 aa).

13-20 (GPVGSGKT) serves as a coordination point for GTP.

This sequence belongs to the SIMIBI class G3E GTPase family. UreG subfamily. As to quaternary structure, homodimer. UreD, UreF and UreG form a complex that acts as a GTP-hydrolysis-dependent molecular chaperone, activating the urease apoprotein by helping to assemble the nickel containing metallocenter of UreC. The UreE protein probably delivers the nickel.

It localises to the cytoplasm. Its function is as follows. Facilitates the functional incorporation of the urease nickel metallocenter. This process requires GTP hydrolysis, probably effectuated by UreG. The protein is Urease accessory protein UreG of Acinetobacter baylyi (strain ATCC 33305 / BD413 / ADP1).